A 134-amino-acid polypeptide reads, in one-letter code: Holo-[acyl-carrier-protein] synthase (134 aa).

Mg(2+) contacts are provided by Asp-8 and Glu-57.

It belongs to the P-Pant transferase superfamily. AcpS family. Requires Mg(2+) as cofactor.

The protein localises to the cytoplasm. The catalysed reaction is apo-[ACP] + CoA = holo-[ACP] + adenosine 3',5'-bisphosphate + H(+). Transfers the 4'-phosphopantetheine moiety from coenzyme A to a Ser of acyl-carrier-protein. The protein is Holo-[acyl-carrier-protein] synthase of Roseobacter denitrificans (strain ATCC 33942 / OCh 114) (Erythrobacter sp. (strain OCh 114)).